A 388-amino-acid chain; its full sequence is Cobalt-precorrin-5B C(1)-methyltransferase (388 aa).

Belongs to the CbiD family.

It carries out the reaction Co-precorrin-5B + S-adenosyl-L-methionine = Co-precorrin-6A + S-adenosyl-L-homocysteine. It functions in the pathway cofactor biosynthesis; adenosylcobalamin biosynthesis; cob(II)yrinate a,c-diamide from sirohydrochlorin (anaerobic route): step 6/10. Catalyzes the methylation of C-1 in cobalt-precorrin-5B to form cobalt-precorrin-6A. This Rubrobacter xylanophilus (strain DSM 9941 / JCM 11954 / NBRC 16129 / PRD-1) protein is Cobalt-precorrin-5B C(1)-methyltransferase.